The following is a 327-amino-acid chain: Sugar transporter ERD6-like 9 (327 aa).

Transmembrane regions (helical) follow at residues F26–G46, V68–A88, V102–L122, F125–I145, G152–L172, I180–P200, L260–Y280, and I295–V315.

The protein belongs to the major facilitator superfamily. Sugar transporter (TC 2.A.1.1) family.

The protein localises to the membrane. Sugar transporter. The chain is Sugar transporter ERD6-like 9 from Arabidopsis thaliana (Mouse-ear cress).